The chain runs to 433 residues: Adenosylhomocysteinase B (433 aa).

Substrate-binding residues include Thr-57, Asp-132, Glu-157, Lys-187, and Asp-191. Positions 184–351 are NAD binding; sequence SVTKSKFDNL…EGRLVNLGCA (168 aa).

Belongs to the adenosylhomocysteinase family. Homotetramer. It depends on NAD(+) as a cofactor.

It is found in the cytoplasm. It catalyses the reaction S-adenosyl-L-homocysteine + H2O = L-homocysteine + adenosine. The protein operates within amino-acid biosynthesis; L-homocysteine biosynthesis; L-homocysteine from S-adenosyl-L-homocysteine: step 1/1. Its function is as follows. Catalyzes the hydrolysis of S-adenosyl-L-homocysteine to form adenosine and homocysteine. Binds copper ions. The protein is Adenosylhomocysteinase B (ahcy-b) of Xenopus laevis (African clawed frog).